The chain runs to 212 residues: Ras-related protein Rab-2A (212 aa).

Position 2 is an N-acetylalanine (Ala2). Residues 2–19 (AYAYLFKYIIIGDTGVGK) are required for interaction with PRKCI. 7 residues coordinate GTP: Gly16, Val17, Gly18, Lys19, Ser20, Cys21, and Thr38. Residue Ser20 participates in Mg(2+) binding. The Switch 1 signature appears at 37–42 (LTIGVE). Residues Thr38 and Asp61 each contribute to the Mg(2+) site. The Switch 2 motif lies at 63 to 72 (AGQESFRSIT). GTP is bound by residues Gly64, Asn119, Lys120, Asp122, Ala150, and Lys151. Residues 190–212 (QHAATNASHGSNQGGQQAGGGCC) form a disordered region. Positions 201-212 (NQGGQQAGGGCC) are enriched in gly residues. Residues Cys211 and Cys212 are each lipidated (S-geranylgeranyl cysteine).

This sequence belongs to the small GTPase superfamily. Rab family. As to quaternary structure, interacts with PRKCI. Interacts with TRIP11. Interacts (in GTP-bound form) with GARIN1B. Interacts (GTP-bound) with HOPS complex component VPS39; interaction contributes to obtaining a functional HOPS complex that promotes autophagosome-lysosome membrane fusion driven by STX17-SNAP29-VAMP8. Interacts with VPS41. Mg(2+) is required as a cofactor. Post-translationally, prenylated. Prenylation is required for association with cellular membranes.

It is found in the endoplasmic reticulum-Golgi intermediate compartment membrane. The protein localises to the melanosome. It localises to the endoplasmic reticulum membrane. The protein resides in the golgi apparatus membrane. Its subcellular location is the cytoplasmic vesicle. It is found in the secretory vesicle. The protein localises to the acrosome. It localises to the autophagosome membrane. The enzyme catalyses GTP + H2O = GDP + phosphate + H(+). Regulated by guanine nucleotide exchange factors (GEFs) which promote the exchange of bound GDP for free GTP, GTPase activating proteins (GAPs) which increase the GTP hydrolysis activity, and GDP dissociation inhibitors (GDIs) which inhibit the dissociation of the nucleotide from the GTPase. Functionally, the small GTPases Rab are key regulators of intracellular membrane trafficking, from the formation of transport vesicles to their fusion with membranes. Rabs cycle between active GTP-bound and inactive GDP-bound states. In their active state, drive transport of vesicular carriers from donor organelles to acceptor organelles to regulate the membrane traffic that maintains organelle identity and morphology. RAB2A regulates autophagy by promoting autophagosome-lysosome fusion via recruitment of the HOPS endosomal tethering complex; this process involves autophagosomal RAB2A and lysosomal RAB39A recruitment of HOPS subcomplexes VPS39-VPS11 and VPS41-VPS16-VPS18-VPS33A, respectively, which assemble into a functional complex to mediate membrane tethering and SNAREs-driven membrane fusion. Required for protein transport from the endoplasmic reticulum to the Golgi complex. Regulates the compacted morphology of the Golgi. Together with RAB2B, redundantly required for efficient autophagic flux. The chain is Ras-related protein Rab-2A from Mus musculus (Mouse).